The sequence spans 367 residues: Phosphoribosylaminoimidazole-succinocarboxamide synthase (367 aa).

It belongs to the SAICAR synthetase family.

The catalysed reaction is 5-amino-1-(5-phospho-D-ribosyl)imidazole-4-carboxylate + L-aspartate + ATP = (2S)-2-[5-amino-1-(5-phospho-beta-D-ribosyl)imidazole-4-carboxamido]succinate + ADP + phosphate + 2 H(+). It participates in purine metabolism; IMP biosynthesis via de novo pathway; 5-amino-1-(5-phospho-D-ribosyl)imidazole-4-carboxamide from 5-amino-1-(5-phospho-D-ribosyl)imidazole-4-carboxylate: step 1/2. The sequence is that of Phosphoribosylaminoimidazole-succinocarboxamide synthase from Shewanella sp. (strain MR-4).